We begin with the raw amino-acid sequence, 666 residues long: Asperfuranone cluster transcription factor afoA (666 aa).

The zn(2)-C6 fungal-type DNA-binding region spans 16-43 (CEECRRRKARCDRVRPKCGFCTENELQC). 2 disordered regions span residues 184–206 (LSFD…STTR) and 347–373 (AGSD…GENA). Low complexity predominate over residues 353-369 (LSPPSSSPPSSLTLSPS).

Its subcellular location is the nucleus. Transcription factor that regulates the expression of the gene cluster that mediates the biosynthesis of asperfuranone, a probable antitumor agent. This is Asperfuranone cluster transcription factor afoA from Emericella nidulans (strain FGSC A4 / ATCC 38163 / CBS 112.46 / NRRL 194 / M139) (Aspergillus nidulans).